The sequence spans 246 residues: MSVIGRIHSFESCGTVDGPGIRFITFFQGCLMRCLYCHNRDTWDTHGGKEVTVEDLMKEVVTYRHFMNASGGGVTASGGEAILQAEFVRDWFRACKKEGIHTCLDTNGFVRRYDPVIDELLEVTDLVMLDLKQMNDEIHQNLVGVSNHRTLEFAKYLANKNVKVWIRYVVVPGWSDDDDSAHRLGEFTRDMGNVEKIELLPYHELGKHKWVAMGEEYKLDGVKPPKKETMERVKGILEQYGHKVMF.

Residues V16 to Q239 form the Radical SAM core domain. [4Fe-4S] cluster is bound by residues C30, C34, and C37. S-adenosyl-L-methionine-binding positions include Y36–H38, G79, D130–K132, and H203.

This sequence belongs to the organic radical-activating enzymes family. [4Fe-4S] cluster serves as cofactor.

The protein localises to the cytoplasm. The catalysed reaction is glycyl-[formate C-acetyltransferase] + reduced [flavodoxin] + S-adenosyl-L-methionine = glycin-2-yl radical-[formate C-acetyltransferase] + semiquinone [flavodoxin] + 5'-deoxyadenosine + L-methionine + H(+). Its function is as follows. Activation of pyruvate formate-lyase 1 under anaerobic conditions by generation of an organic free radical, using S-adenosylmethionine and reduced flavodoxin as cosubstrates to produce 5'-deoxy-adenosine. In Escherichia coli O157:H7, this protein is Pyruvate formate-lyase 1-activating enzyme (pflA).